The following is a 123-amino-acid chain: UPF0738 protein BCE_1319 (123 aa).

Belongs to the UPF0738 family.

The chain is UPF0738 protein BCE_1319 from Bacillus cereus (strain ATCC 10987 / NRS 248).